Here is a 303-residue protein sequence, read N- to C-terminus: uncharacterized protein (303 aa).

A Fe2OG dioxygenase domain is found at 173 to 300; that stretch reads KLPELLGQLN…RFTVNGWIRK (128 aa).

The cofactor is Fe(2+). L-ascorbate is required as a cofactor.

This is an uncharacterized protein from Synechocystis sp. (strain ATCC 27184 / PCC 6803 / Kazusa).